Reading from the N-terminus, the 752-residue chain is THO complex subunit HPR1 (752 aa).

Serine 234 carries the post-translational modification Phosphoserine. The segment at 648 to 752 (RKKRALEEEA…SNGSSTQDMK (105 aa)) is disordered. The segment covering 692–702 (EISEENTKIKS) has biased composition (basic and acidic residues). The span at 720–752 (PQNTTAQLENPKTEDNNAATSNISNGSSTQDMK) shows a compositional bias: polar residues.

As to quaternary structure, component of the THO complex, which is composed of HPR1, MFT1, THO2 and THP2. Together with SUB2, TEX1 and YRA1, THO forms the transcription/export (TREX) complex. THO associates with DNA and RNA in vitro.

It is found in the nucleus. Component the THO subcomplex of the TREX complex, which operates in coupling transcription elongation to mRNA export. The THO complex is recruited to transcribed genes and moves along the gene with the elongating polymerase during transcription. THO is important for stabilizing nascent RNA in the RNA polymerase II elongation complex by preventing formation of DNA:RNA hybrids behind the elongating polymerase. It functions in cotranscriptional formation of an export-competent messenger ribonucleoprotein particle (mRNP) by facilitating the loading of ATP-dependent RNA helicase SUB2 and the mRNA export factor YRA1 along the nascent mRNA. This Saccharomyces cerevisiae (strain ATCC 204508 / S288c) (Baker's yeast) protein is THO complex subunit HPR1 (HPR1).